The primary structure comprises 1669 residues: Dystrophin, isoform B (1669 aa).

Positions 1 to 11 (MTAKPPPPIPP) are enriched in pro residues. Disordered regions lie at residues 1 to 28 (MTAK…LAPE), 43 to 243 (RGQQ…SEDA), 327 to 356 (RAQA…RSTI), 389 to 417 (GGGG…MPLS), and 481 to 508 (SGAL…NSSG). Residues 53–62 (SQEQHATNTL) are compositionally biased toward polar residues. Residues 118–131 (GLPPTMRQPPPLPR) show a composition bias toward pro residues. Low complexity predominate over residues 132-147 (KPASTQSSAQNSAQSS). The span at 153–166 (KFKDKPPPPPEKHS) shows a compositional bias: basic and acidic residues. 2 stretches are compositionally biased toward low complexity: residues 328 to 347 (AQAQ…SNSQ) and 396 to 405 (STGNAVANSG). The segment covering 485–500 (SREELRMRRRSSHDET) has biased composition (basic and acidic residues). Spectrin repeat units lie at residues 541–643 (QRFE…KQLH), 650–747 (QSFD…NRLE), 754–883 (NALL…HRLD), and 890–990 (RQFQ…KVLC). Residues 827 to 851 (VSDTSDTEANHDSDSRYMSAEEQSR) form a disordered region. Residues 994–1024 (AQQTHENGDDGRTTSNSGTIGPLPNLGQSVK) form a disordered region. A WW domain is found at 1021–1054 (QSVKPPWERATTAANVPYYIDHERETTHWDHPEM). The ZZ-type zinc finger occupies 1279-1335 (KHQAKCNICKEYPIVGFRYRCLKCFNFDMCQKCFFFGRNAKNHKLTHPMHEYCTTTT). The Zn(2+) site is built by C1284, C1287, C1299, C1302, C1308, C1311, H1321, and H1325. A Phosphoserine modification is found at S1379. 2 disordered regions span residues 1488–1516 (EQSG…GEQG) and 1559–1669 (DEPN…ELQK). Composition is skewed to polar residues over residues 1497–1509 (NGMQ…MTGL) and 1580–1611 (ALNS…QQNG). The span at 1630 to 1641 (QELESINDDLED) shows a compositional bias: acidic residues. The segment covering 1642 to 1660 (SSSSNTTNTTTTTTTTATT) has biased composition (low complexity).

In terms of assembly, component of the dystrophin associated protein complex (DAPC). Interacts with Dg, via the Dg WW domain binding sites. As to expression, expressed in neuronally derived tissues, mainly the CNS and the brain of stage 16 embryos. Lower level expression is seen in the sensory organs. Expression is absent from the musculature. In larvae, expression is predominant throughout the neuropil and brain and in the eye antennal disks.

The protein localises to the cell membrane. The protein resides in the sarcolemma. It localises to the cytoplasm. It is found in the cytoskeleton. Its function is as follows. Required for the maintenance of appropriate synaptic retrograde communication and the stabilization of muscle cell architecture or physiology. May play a role in anchoring the cytoskeleton to the plasma membrane. The chain is Dystrophin, isoform B (Dys) from Drosophila melanogaster (Fruit fly).